A 131-amino-acid chain; its full sequence is MSDLALPAWQASLVAIGAVPGAWLRLRVVNHLEPMVPRKHWGTFAVNMVAAFALGLVLALQAKCAPESGASPLILLIGVGFFGSLSTFSTFAVEVLNTLREHRWSEALVLAVGSILGGLLAVAAGVGLANG.

A run of 4 helical transmembrane segments spans residues 4–24, 40–60, 73–93, and 108–128; these read LALP…GAWL, HWGT…VLAL, LILL…TFAV, and LVLA…GVGL. Residues glycine 83 and serine 86 each contribute to the Na(+) site.

It belongs to the fluoride channel Fluc/FEX (TC 1.A.43) family.

It is found in the cell inner membrane. It catalyses the reaction fluoride(in) = fluoride(out). Its activity is regulated as follows. Na(+) is not transported, but it plays an essential structural role and its presence is essential for fluoride channel function. Functionally, fluoride-specific ion channel. Important for reducing fluoride concentration in the cell, thus reducing its toxicity. This is Fluoride-specific ion channel FluC 1 from Prochlorococcus marinus (strain MIT 9313).